The chain runs to 434 residues: MEFLDLGPFSRASGTIRLPGSKSISNRVLLLAALAEGETTITNLLDSDDTRVMLDALEKLGVRLKRDGDTCVVTGTRGAFTARTADLFLGNAGTAVRPLTAALAVNGGDYRIHGVPRMHERPIGDLVDGLRQLGARIDYEENEGYPPLRIRPGQINADAPITVRGDVSSQFLTSLLMTLPLLRTESGVSTVQVDGELISKPYIEITIKLMERFGIKVERHGWHQFVVPAGQRYQSPGTIMVEGDASSASYFLAAGALGGGPLRVEGVGRASIQGDVGFADALIKMGANLQMGDDWIEVRGVGHDSGKLEPIDMDCNLIPDAAMTIAVAALFADGATTLRNIASWRVKETDRLAAMATELRKVGAKVQEGEDYLVIEPPEKLTPNAAIDTYDDHRMAMCFSLVSLGGVPVRINDPKCVGKTFPDYFERFTALAQP.

3 residues coordinate 3-phosphoshikimate: Lys22, Ser23, and Arg27. A phosphoenolpyruvate-binding site is contributed by Lys22. Gly93 and Arg121 together coordinate phosphoenolpyruvate. Positions 168, 169, 170, 199, 320, and 347 each coordinate 3-phosphoshikimate. Gln170 serves as a coordination point for phosphoenolpyruvate. Asp320 (proton acceptor) is an active-site residue. Arg351, Arg394, and Lys419 together coordinate phosphoenolpyruvate.

This sequence belongs to the EPSP synthase family. In terms of assembly, monomer.

It is found in the cytoplasm. It carries out the reaction 3-phosphoshikimate + phosphoenolpyruvate = 5-O-(1-carboxyvinyl)-3-phosphoshikimate + phosphate. The protein operates within metabolic intermediate biosynthesis; chorismate biosynthesis; chorismate from D-erythrose 4-phosphate and phosphoenolpyruvate: step 6/7. Functionally, catalyzes the transfer of the enolpyruvyl moiety of phosphoenolpyruvate (PEP) to the 5-hydroxyl of shikimate-3-phosphate (S3P) to produce enolpyruvyl shikimate-3-phosphate and inorganic phosphate. This Paraburkholderia phytofirmans (strain DSM 17436 / LMG 22146 / PsJN) (Burkholderia phytofirmans) protein is 3-phosphoshikimate 1-carboxyvinyltransferase.